The following is a 315-amino-acid chain: Ribosomal RNA small subunit methyltransferase H (315 aa).

S-adenosyl-L-methionine contacts are provided by residues 33–35, aspartate 52, phenylalanine 84, aspartate 106, and glutamine 113; that span reads GGH.

The protein belongs to the methyltransferase superfamily. RsmH family.

It is found in the cytoplasm. The catalysed reaction is cytidine(1402) in 16S rRNA + S-adenosyl-L-methionine = N(4)-methylcytidine(1402) in 16S rRNA + S-adenosyl-L-homocysteine + H(+). Its function is as follows. Specifically methylates the N4 position of cytidine in position 1402 (C1402) of 16S rRNA. The chain is Ribosomal RNA small subunit methyltransferase H from Lactobacillus acidophilus (strain ATCC 700396 / NCK56 / N2 / NCFM).